Here is a 143-residue protein sequence, read N- to C-terminus: ATP synthase F(0) complex subunit C2, mitochondrial (143 aa).

A mitochondrion-targeting transit peptide spans 1-68 (MYTCAKFVST…RSFQTSAISR (68 aa)). The chain crosses the membrane as a helical span at residues 84 to 104 (VGVAGSGAGIGTVFGSLIIGY). The residue at position 111 (Lys-111) is an N6,N6,N6-trimethyllysine. Residues 119-139 (ILGFALSEAMGLFCLMVAFLI) traverse the membrane as a helical segment.

This sequence belongs to the ATPase C chain family. F-type ATPases have 2 components, CF(1) - the catalytic core - and CF(0) - the membrane proton channel. CF(1) has five subunits: alpha(3), beta(3), gamma(1), delta(1), epsilon(1). CF(0) has three main subunits: a, b and c. Interacts with DNAJC30; interaction is direct. Post-translationally, trimethylated by ATPSCKMT at Lys-111. Methylation is required for proper incorporation of the C subunit into the ATP synthase complex and mitochondrial respiration.

Its subcellular location is the mitochondrion membrane. Functionally, mitochondrial membrane ATP synthase (F(1)F(0) ATP synthase or Complex V) produces ATP from ADP in the presence of a proton gradient across the membrane which is generated by electron transport complexes of the respiratory chain. F-type ATPases consist of two structural domains, F(1) - containing the extramembraneous catalytic core and F(0) - containing the membrane proton channel, linked together by a central stalk and a peripheral stalk. During catalysis, ATP synthesis in the catalytic domain of F(1) is coupled via a rotary mechanism of the central stalk subunits to proton translocation. Part of the complex F(0) domain. A homomeric c-ring of probably 10 subunits is part of the complex rotary element. This chain is ATP synthase F(0) complex subunit C2, mitochondrial, found in Ovis aries (Sheep).